Consider the following 589-residue polypeptide: Arylsulfatase L (589 aa).

Residues 1–31 form the signal peptide; it reads MLHLHHSCLCFRSWLPAMLAVLLSLAPSASS. Asp46 and Asp47 together coordinate Ca(2+). The N-linked (GlcNAc...) asparagine glycan is linked to Asn58. Cys86 is a Ca(2+) binding site. Residue Cys86 is the Nucleophile of the active site. Cys86 is modified (3-oxoalanine (Cys)). A glycan (N-linked (GlcNAc...) asparagine) is linked at Asn125. Lys145 contributes to the substrate binding site. His147 is a catalytic residue. A glycan (N-linked (GlcNAc...) asparagine) is linked at Asn258. His301 contacts substrate. Asn344 carries an N-linked (GlcNAc...) asparagine glycan. Residues Asp353 and His354 each coordinate Ca(2+). Lys378 contacts substrate.

It belongs to the sulfatase family. The cofactor is Ca(2+). N-glycosylated. Post-translationally, the conversion to 3-oxoalanine (also known as C-formylglycine, FGly), of a serine or cysteine residue in prokaryotes and of a cysteine residue in eukaryotes, is critical for catalytic activity. Expressed in the pancreas, liver and kidney.

It is found in the golgi apparatus. The protein resides in the golgi stack. The catalysed reaction is an aryl sulfate + H2O = a phenol + sulfate + H(+). Inhibited by millimolar concentrations of warfarin. In terms of biological role, exhibits arylsulfatase activity towards the artificial substrate 4-methylumbelliferyl sulfate. May be essential for the correct composition of cartilage and bone matrix during development. Has no activity toward steroid sulfates. The sequence is that of Arylsulfatase L from Homo sapiens (Human).